We begin with the raw amino-acid sequence, 759 residues long: 5-methyltetrahydropteroyltriglutamate--homocysteine methyltransferase (759 aa).

5-methyltetrahydropteroyltri-L-glutamate contacts are provided by residues 17–20 (RELK) and Lys-116. Residues 430-432 (IGS) and Glu-483 contribute to the L-homocysteine site. L-methionine-binding positions include 430 to 432 (IGS) and Glu-483. 5-methyltetrahydropteroyltri-L-glutamate contacts are provided by residues 514–515 (RC) and Trp-560. Asp-598 contacts L-homocysteine. Asp-598 is a binding site for L-methionine. Glu-604 serves as a coordination point for 5-methyltetrahydropteroyltri-L-glutamate. Zn(2+)-binding residues include His-641, Cys-643, and Glu-665. The active-site Proton donor is His-694. Cys-726 is a Zn(2+) binding site.

The protein belongs to the vitamin-B12 independent methionine synthase family. Requires Zn(2+) as cofactor.

The enzyme catalyses 5-methyltetrahydropteroyltri-L-glutamate + L-homocysteine = tetrahydropteroyltri-L-glutamate + L-methionine. The protein operates within amino-acid biosynthesis; L-methionine biosynthesis via de novo pathway; L-methionine from L-homocysteine (MetE route): step 1/1. Catalyzes the transfer of a methyl group from 5-methyltetrahydrofolate to homocysteine resulting in methionine formation. This is 5-methyltetrahydropteroyltriglutamate--homocysteine methyltransferase from Lactococcus lactis subsp. lactis (strain IL1403) (Streptococcus lactis).